The sequence spans 383 residues: Insulinoma-associated protein 1a (383 aa).

An SNAG domain region spans residues 1–20; it reads MPRGFLVKRNKKATPVSYRV. 2 disordered regions span residues 99-141 and 229-269; these read PVDL…AMRK and RWHK…SEDG. The segment covering 105–120 has biased composition (polar residues); that stretch reads GTSNSNRTGTTVTTKR. Positions 130–140 are enriched in basic residues; it reads KPASKKAKAMR. The C2H2-type 1 zinc-finger motif lies at 209–231; the sequence is YRCPECDKLFSCPANLASHRRWH. Residues 244–256 show a composition bias toward basic and acidic residues; sequence APEKEETSSDRDT. The C2H2-type 2; degenerate zinc-finger motif lies at 271 to 295; that stretch reads YDCQHCGKKFKRQAYLKKHVTAHHD. 2 C2H2-type zinc fingers span residues 314–337 and 342–365; these read HLCP…RLQH and YPCK…NKCH.

It belongs to the INSM1 family.

Its subcellular location is the nucleus. Its function is as follows. May act as a transcriptional regulator. May play a role in neurogenesis and neuroendocrine cell differentiation during embryonic development. This is Insulinoma-associated protein 1a (insm1a) from Danio rerio (Zebrafish).